The following is a 603-amino-acid chain: Aspartate--tRNA(Asp/Asn) ligase (603 aa).

L-aspartate is bound at residue glutamate 182. The tract at residues 206-209 (QLFK) is aspartate. Arginine 228 is a binding site for L-aspartate. ATP is bound by residues 228–230 (RDE) and glutamine 237. Histidine 454 is an L-aspartate binding site. Glutamate 500 provides a ligand contact to ATP. Arginine 507 contacts L-aspartate. 552 to 555 (GLDR) contacts ATP.

Belongs to the class-II aminoacyl-tRNA synthetase family. Type 1 subfamily. In terms of assembly, homodimer.

The protein localises to the cytoplasm. It catalyses the reaction tRNA(Asx) + L-aspartate + ATP = L-aspartyl-tRNA(Asx) + AMP + diphosphate. Its function is as follows. Aspartyl-tRNA synthetase with relaxed tRNA specificity since it is able to aspartylate not only its cognate tRNA(Asp) but also tRNA(Asn). Reaction proceeds in two steps: L-aspartate is first activated by ATP to form Asp-AMP and then transferred to the acceptor end of tRNA(Asp/Asn). This chain is Aspartate--tRNA(Asp/Asn) ligase, found in Aquifex aeolicus (strain VF5).